Here is a 172-residue protein sequence, read N- to C-terminus: Protein sym-1 (172 aa).

The next 5 helical transmembrane spans lie at Pro-13–Gln-33, Met-52–Gln-72, Gly-94–Thr-114, Leu-128–Leu-148, and Val-152–Gln-172.

This sequence belongs to the peroxisomal membrane protein PXMP2/4 family.

The protein localises to the mitochondrion inner membrane. Its function is as follows. May be involved in cellular response to stress. Required to maintain mitochondrial DNA (mtDNA) integrity and stability. The chain is Protein sym-1 (sym-1) from Neurospora crassa (strain ATCC 24698 / 74-OR23-1A / CBS 708.71 / DSM 1257 / FGSC 987).